A 431-amino-acid chain; its full sequence is IMP-specific 5'-nucleotidase 1 (431 aa).

Position 117 (Lys117) interacts with ATP. Asp157 acts as the Nucleophile in catalysis. IMP-binding residues include Asp157, Asp159, Asp165, Thr193, Asp349, and Lys357. Positions 157 and 159 each coordinate Mg(2+). Asp159 functions as the Proton donor in the catalytic mechanism. Asp388 provides a ligand contact to Mg(2+).

Belongs to the ISN1 family. In terms of assembly, homotetramer. Mg(2+) is required as a cofactor.

It catalyses the reaction IMP + H2O = inosine + phosphate. Its activity is regulated as follows. Allosterically activated by ATP. ATP binding is a prerequisite to magnesium and substrate binding. ATP binds to 2 of the subunits in the homotetramer inducing a closure of these 2 subunits and the release of the C-terminal loop, thereby activating the enzyme. In terms of biological role, IMP-specific 5'-nucleotidase involved in IMP (inositol monophosphate) degradation. The sequence is that of IMP-specific 5'-nucleotidase 1 (isn-1) from Neurospora crassa (strain ATCC 24698 / 74-OR23-1A / CBS 708.71 / DSM 1257 / FGSC 987).